We begin with the raw amino-acid sequence, 288 residues long: 4-hydroxybenzoate octaprenyltransferase (288 aa).

The next 7 helical transmembrane spans lie at 38–58, 98–120, 141–161, 163–183, 213–233, 238–258, and 268–288; these read IAAQSIPSLHILIVFTAGVFL, ILFASLVGLSFLLVLTLNSMTIW, LLQVVLGAAFGWSIPMGFSAV, ESLPLVCWVLFLVNILWSVIY, LIIGILQIVMIVLLVLVGSLA, VYYIALSLSALLFIYQQKLMV, and AFLNNNYVGLILFIGIFLSYL.

It belongs to the UbiA prenyltransferase family. Mg(2+) is required as a cofactor.

The protein localises to the cell inner membrane. The enzyme catalyses all-trans-octaprenyl diphosphate + 4-hydroxybenzoate = 4-hydroxy-3-(all-trans-octaprenyl)benzoate + diphosphate. It participates in cofactor biosynthesis; ubiquinone biosynthesis. In terms of biological role, catalyzes the prenylation of para-hydroxybenzoate (PHB) with an all-trans polyprenyl group. Mediates the second step in the final reaction sequence of ubiquinone-8 (UQ-8) biosynthesis, which is the condensation of the polyisoprenoid side chain with PHB, generating the first membrane-bound Q intermediate 3-octaprenyl-4-hydroxybenzoate. This chain is 4-hydroxybenzoate octaprenyltransferase, found in Providencia stuartii.